Here is a 417-residue protein sequence, read N- to C-terminus: NADH-quinone oxidoreductase subunit D (417 aa).

Belongs to the complex I 49 kDa subunit family. As to quaternary structure, NDH-1 is composed of 14 different subunits. Subunits NuoB, C, D, E, F, and G constitute the peripheral sector of the complex.

The protein localises to the cell inner membrane. The catalysed reaction is a quinone + NADH + 5 H(+)(in) = a quinol + NAD(+) + 4 H(+)(out). Functionally, NDH-1 shuttles electrons from NADH, via FMN and iron-sulfur (Fe-S) centers, to quinones in the respiratory chain. The immediate electron acceptor for the enzyme in this species is believed to be ubiquinone. Couples the redox reaction to proton translocation (for every two electrons transferred, four hydrogen ions are translocated across the cytoplasmic membrane), and thus conserves the redox energy in a proton gradient. This Francisella tularensis subsp. mediasiatica (strain FSC147) protein is NADH-quinone oxidoreductase subunit D.